The sequence spans 134 residues: Arsenate reductase 2 (134 aa).

Catalysis depends on nucleophile residues Cys11, Cys83, and Cys90. 2 disulfides stabilise this stretch: Cys11/Cys83 and Cys83/Cys90.

The protein belongs to the low molecular weight phosphotyrosine protein phosphatase family. Thioredoxin-coupled ArsC subfamily.

The protein localises to the cytoplasm. It carries out the reaction arsenate + [thioredoxin]-dithiol + H(+) = arsenite + [thioredoxin]-disulfide + H2O. In terms of biological role, catalyzes the reduction of arsenate [As(V)] to arsenite [As(III)]. The chain is Arsenate reductase 2 from Bacillus cereus (strain ATCC 10987 / NRS 248).